The following is a 57-amino-acid chain: uncharacterized protein (57 aa).

The helical transmembrane segment at 34–54 (AALLDAAALVVIPGLLTVAAV) threads the bilayer.

The protein resides in the membrane. This is an uncharacterized protein from Dictyostelium discoideum (Social amoeba).